An 82-amino-acid polypeptide reads, in one-letter code: Small ribosomal subunit protein uS17 (82 aa).

This sequence belongs to the universal ribosomal protein uS17 family. As to quaternary structure, part of the 30S ribosomal subunit.

One of the primary rRNA binding proteins, it binds specifically to the 5'-end of 16S ribosomal RNA. This Bradyrhizobium sp. (strain BTAi1 / ATCC BAA-1182) protein is Small ribosomal subunit protein uS17.